The sequence spans 315 residues: Glutathione synthetase (315 aa).

Positions 125–310 constitute an ATP-grasp domain; sequence KLFTAWFSDL…ITGMLMDAIE (186 aa). Residue 151-207 coordinates ATP; it reads WEKHSDIILKPLDGMGGASIFRVKEGDPNLGVIAETLTEHGTRYCMAQNYLPAIKDG. Residues Glu-281 and Asn-283 each coordinate Mg(2+).

Belongs to the prokaryotic GSH synthase family. Mg(2+) is required as a cofactor. Requires Mn(2+) as cofactor.

It carries out the reaction gamma-L-glutamyl-L-cysteine + glycine + ATP = glutathione + ADP + phosphate + H(+). Its pathway is sulfur metabolism; glutathione biosynthesis; glutathione from L-cysteine and L-glutamate: step 2/2. The protein is Glutathione synthetase of Escherichia coli O157:H7.